The following is a 237-amino-acid chain: dTDP-3-amino-3,4,6-trideoxy-alpha-D-glucopyranose N,N-dimethyltransferase (237 aa).

Tyrosine 14 and arginine 17 together coordinate substrate. S-adenosyl-L-methionine-binding positions include tyrosine 21, alanine 46, glutamate 67, 89-90 (DM), and methionine 105. Residues 145 to 147 (TFA), serine 152, 165 to 169 (RVSHS), and arginine 229 contribute to the substrate site.

The protein belongs to the methyltransferase TylM1/DesVI family. Homodimer.

It catalyses the reaction dTDP-3-amino-3,4,6-trideoxy-alpha-D-glucose + 2 S-adenosyl-L-methionine = dTDP-alpha-D-desosamine + 2 S-adenosyl-L-homocysteine + 2 H(+). It participates in antibiotic biosynthesis. S-adenosyl-L-methionine-dependent methyltransferase involved in the biosynthesis of desosamine, found in certain macrolide antibiotics such as erthyromycin, azithromycin, clarithromycin, and methymycin. Catalyzes the last step in the biosynthesis of dTDP-desosamine, i.e. the N,N-dimethylation of the 3-amino group of dTDP-3-amino-3,4,6-trideoxy-alpha-D-glucose. In Streptomyces venezuelae, this protein is dTDP-3-amino-3,4,6-trideoxy-alpha-D-glucopyranose N,N-dimethyltransferase.